The primary structure comprises 472 residues: Glutamine synthetase (472 aa).

Residues 17-101 enclose the GS beta-grasp domain; sequence YDIKFVLLRF…LRCSIYEPST (85 aa). One can recognise a GS catalytic domain in the interval 109 to 472; the sequence is PRSIAIRAEN…HPVEFEMYYA (364 aa). Mg(2+)-binding residues include Glu-134 and Glu-136. Glu-212 lines the ATP pocket. 2 residues coordinate Mg(2+): Glu-217 and Glu-225. Residues 269 to 270 and Gly-270 each bind L-glutamate; that span reads NG. His-274 is a binding site for Mg(2+). Residues 276 to 278 and Ser-278 contribute to the ATP site; that span reads NMS. L-glutamate is bound by residues Arg-326, Glu-332, and Arg-344. The ATP site is built by Arg-344, Arg-349, and Lys-357. A Mg(2+)-binding site is contributed by Glu-362. L-glutamate is bound at residue Arg-364. Tyr-402 bears the O-AMP-tyrosine mark.

This sequence belongs to the glutamine synthetase family. Oligomer of 12 subunits arranged in the form of two hexameric ring. The cofactor is Mg(2+).

It is found in the cytoplasm. It catalyses the reaction L-glutamate + NH4(+) + ATP = L-glutamine + ADP + phosphate + H(+). Its activity is regulated as follows. The activity of this enzyme could be controlled by adenylation under conditions of abundant glutamine. Its function is as follows. Catalyzes the ATP-dependent biosynthesis of glutamine from glutamate and ammonia. This chain is Glutamine synthetase, found in Pasteurella multocida (strain Pm70).